Here is a 611-residue protein sequence, read N- to C-terminus: MTAEKAEGATGFAGFDPKSVEPYIVKDPESLAINMARAAEQLGKAASAWLAPREAGEKTDSFAEPVSDMVKTLSKVSEYWLSDPRRTLEAQTHLLGSFFDMWSRTLQRMAGDAVEDPANLQRNDKRFADEDWVKNPFFDFIRQAYFVTSDWAERMVRDAEGLDDHTRHKAAFYVRQIASALSPTNFITTNPQLYRETVASSGANLVKGMQMLAEDIAAGRGELRLRQTDTSKFAIGENIAITPGKVIAQNDVCQVLQYEASTETVLKRPLLICPPWINKFYVLDLNPEKSFIKWAVDQGQTVFVISWVNPDERHASKDWEAYAREGIGFALDIIEQATGEREVNSIGYCVGGTLLAATLALHAAEGDERIRSATLFTTQVDFTHAGDLKVFVDDDQIRHLEANMSATGYLEGSKMASAFNMLRASELIWPYFVNNYLKGQDPLPFDLLYWNSDSTRMPAANHSFYLRNCYLENRLSKGEMVLAGRRVSLGDVKIPIYNLATKEDHIAPAKSVFLGSSSFGGKVTFVLSGSGHIAGVVNPPARSKYQYWTGGAPKGDIETWMGKAKETAGSWWPHWQGWVERLDKRRVPARKAGGPLNSIEEAPGSYVRVRA.

The active site involves Cys-349.

This sequence belongs to the PHA/PHB synthase family. Type I PhaC subfamily. In terms of assembly, monomer.

It is found in the cytoplasm. The catalysed reaction is (3R)-3-hydroxybutanoyl-CoA + [(3R)-hydroxybutanoate](n) = [(3R)-hydroxybutanoate](n+1) + CoA. The protein operates within biopolymer metabolism; poly-(R)-3-hydroxybutanoate biosynthesis. Polymerizes D(-)-3-hydroxybutyryl-CoA to create PHB which consists of thousands of hydroxybutyrate molecules linked end to end. PHB serves as an intracellular energy reserve material when cells grow under conditions of nutrient limitation. The protein is Poly(3-hydroxyalkanoate) polymerase subunit PhaC of Rhizobium meliloti (strain 1021) (Ensifer meliloti).